The following is a 268-amino-acid chain: NH(3)-dependent NAD(+) synthetase (268 aa).

46–53 (GISGGQDS) provides a ligand contact to ATP. Asp52 is a Mg(2+) binding site. Arg140 is a deamido-NAD(+) binding site. Thr160 is a binding site for ATP. Mg(2+) is bound at residue Glu165. Positions 173 and 180 each coordinate deamido-NAD(+). 2 residues coordinate ATP: Lys189 and Thr211. 260 to 261 (HK) contacts deamido-NAD(+).

Belongs to the NAD synthetase family. Homodimer.

It carries out the reaction deamido-NAD(+) + NH4(+) + ATP = AMP + diphosphate + NAD(+) + H(+). Its pathway is cofactor biosynthesis; NAD(+) biosynthesis; NAD(+) from deamido-NAD(+) (ammonia route): step 1/1. In terms of biological role, catalyzes the ATP-dependent amidation of deamido-NAD to form NAD. Uses ammonia as a nitrogen source. This Buchnera aphidicola subsp. Schizaphis graminum (strain Sg) protein is NH(3)-dependent NAD(+) synthetase.